A 74-amino-acid chain; its full sequence is Serine rich endogenous peptide 16 (74 aa).

Positions 1 to 31 (MATKISHLVSLLLSLLLLLLFISSQVGFTEA) are cleaved as a signal peptide. The interval 29–74 (TEAKRDERKKMSSPPIPSPLIPSPPIPPPPPRFYVPPSKSRRGKGP) is disordered. The span at 42–62 (PPIPSPLIPSPPIPPPPPRFY) shows a compositional bias: pro residues. The short motif at 60–74 (RFYVPPSKSRRGKGP) is the SCOOP motif element. The SxS motif essential for MIK2 binding motif lies at 66–68 (SKS).

This sequence belongs to the serine rich endogenous peptide (SCOOP) phytocytokine family. As to quaternary structure, interacts with MIK2 (via extracellular leucine-rich repeat domain); this interaction triggers the formation of complex between MIK2 and the BAK1/SERK3 and SERK4 coreceptors, and subsequent BAK1 activation by phosphorylation.

Its subcellular location is the cell membrane. It is found in the secreted. The protein localises to the extracellular space. The protein resides in the apoplast. Functionally, brassicaceae-specific phytocytokine (plant endogenous peptide released into the apoplast) perceived by MIK2 in a BAK1/SERK3 and SERK4 coreceptors-dependent manner, that modulates various physiological and antimicrobial processes including growth prevention and reactive oxygen species (ROS) response regulation. The sequence is that of Serine rich endogenous peptide 16 from Arabidopsis thaliana (Mouse-ear cress).